A 513-amino-acid polypeptide reads, in one-letter code: Nuclear pore complex protein NUP58 (513 aa).

3 disordered regions span residues 28-62, 217-239, and 356-513; these read QTNSIFSQSQPQQTNSIFSQSQPQQTNSIFSQPQQ, SVGSQPSQGQGTNPAPASSGQQQ, and RETA…TTRR. Residues 30–50 are compositionally biased toward polar residues; the sequence is NSIFSQSQPQQTNSIFSQSQP. Composition is skewed to low complexity over residues 51–62 and 217–227; these read QQTNSIFSQPQQ and SVGSQPSQGQG. The segment covering 356 to 365 has biased composition (basic and acidic residues); it reads RETAKQEAAA. Over residues 377–386 the composition is skewed to low complexity; it reads STTSTQPSTQ. Over residues 393 to 427 the composition is skewed to polar residues; it reads SSATPGGSNPPQTSVPTSNPSSGAGFSFLNTPASG. A compositionally biased stretch (low complexity) spans 428 to 446; it reads PSSSLFATPSSTAPTSSLF. 6 consecutive repeat copies span residues 446-447, 458-459, 466-467, 473-474, 486-487, and 497-498. The interval 446–498 is 6 X 2 AA repeats of F-G; it reads FGPSPTPTQTPLFGSSPASTFGSTQSLFGQTTPSLTMPSQFGGATPGSGASFG. Residues 452–484 show a composition bias toward polar residues; the sequence is PTQTPLFGSSPASTFGSTQSLFGQTTPSLTMPS. Basic residues predominate over residues 504 to 513; sequence SRPKSRTTRR.

The protein belongs to the NUP58 family. As to quaternary structure, part of the nuclear pore complex (NPC). The NPC has an eight-fold symmetrical structure comprising a central transport channel and two rings, the cytoplasmic and nuclear rings, to which eight filaments are attached. The cytoplasmic filaments have loose ends, while the nuclear filaments are joined in a distal ring, forming a nuclear basket. NPCs are highly dynamic in configuration and composition, and can be devided in 3 subcomplexes, the NUP62 subcomplex, the NUP107-160 subcomplex and the NUP93 subcomplex, containing approximately 30 different nucleoporin proteins. Interacts with GAI, NUP62, SKP1A and SKP1B. Ubiquitous. Higherst expression in cauline leaves, lowest in roots.

It localises to the nucleus envelope. The protein localises to the nucleus. Its subcellular location is the nuclear pore complex. Functionally, involved in nucleocytoplasmic trafficking. May have regulatory roles in the gibberellin pathway, in auxin signaling and in light perception. The chain is Nuclear pore complex protein NUP58 from Arabidopsis thaliana (Mouse-ear cress).